We begin with the raw amino-acid sequence, 284 residues long: Protoheme IX farnesyltransferase (284 aa).

8 helical membrane passes run 13–33 (IIIG…FPFF), 35–55 (VFLF…SCIF), 87–107 (IFAS…VNIL), 108–128 (SMFL…FFLK), 133–153 (YSTF…HTAI), 162–182 (FLLF…IAIL), 224–244 (FLGY…FYWL), and 264–284 (FYYS…DFIF).

This sequence belongs to the UbiA prenyltransferase family. Protoheme IX farnesyltransferase subfamily.

Its subcellular location is the cell membrane. The catalysed reaction is heme b + (2E,6E)-farnesyl diphosphate + H2O = Fe(II)-heme o + diphosphate. It participates in porphyrin-containing compound metabolism; heme O biosynthesis; heme O from protoheme: step 1/1. Its function is as follows. Converts heme B (protoheme IX) to heme O by substitution of the vinyl group on carbon 2 of heme B porphyrin ring with a hydroxyethyl farnesyl side group. The polypeptide is Protoheme IX farnesyltransferase (Buchnera aphidicola subsp. Schizaphis graminum (strain Sg)).